We begin with the raw amino-acid sequence, 305 residues long: Oxygen-dependent coproporphyrinogen-III oxidase (305 aa).

Residue serine 98 coordinates substrate. A divalent metal cation is bound by residues histidine 102 and histidine 112. Residue histidine 112 is the Proton donor of the active site. 114-116 lines the substrate pocket; sequence NVR. Residues histidine 151 and histidine 181 each coordinate a divalent metal cation. The segment at 246–281 is important for dimerization; it reads YVEFNLVYDRGTLFGLQSGGRTESILMSMPPLARWE. Residue 264–266 coordinates substrate; it reads GGR.

This sequence belongs to the aerobic coproporphyrinogen-III oxidase family. Homodimer. Requires a divalent metal cation as cofactor.

The protein localises to the cytoplasm. The enzyme catalyses coproporphyrinogen III + O2 + 2 H(+) = protoporphyrinogen IX + 2 CO2 + 2 H2O. Its pathway is porphyrin-containing compound metabolism; protoporphyrin-IX biosynthesis; protoporphyrinogen-IX from coproporphyrinogen-III (O2 route): step 1/1. In terms of biological role, involved in the heme biosynthesis. Catalyzes the aerobic oxidative decarboxylation of propionate groups of rings A and B of coproporphyrinogen-III to yield the vinyl groups in protoporphyrinogen-IX. This chain is Oxygen-dependent coproporphyrinogen-III oxidase, found in Vibrio vulnificus (strain CMCP6).